The following is a 323-amino-acid chain: tRNA U34 carboxymethyltransferase (323 aa).

Residues Lys91, Trp105, Lys110, Gly130, 152–154, 181–182, Met196, Tyr200, and Arg315 contribute to the carboxy-S-adenosyl-L-methionine site; these read DPT and IE.

It belongs to the class I-like SAM-binding methyltransferase superfamily. CmoB family. In terms of assembly, homotetramer.

The catalysed reaction is carboxy-S-adenosyl-L-methionine + 5-hydroxyuridine(34) in tRNA = 5-carboxymethoxyuridine(34) in tRNA + S-adenosyl-L-homocysteine + H(+). Its function is as follows. Catalyzes carboxymethyl transfer from carboxy-S-adenosyl-L-methionine (Cx-SAM) to 5-hydroxyuridine (ho5U) to form 5-carboxymethoxyuridine (cmo5U) at position 34 in tRNAs. In Escherichia coli O157:H7, this protein is tRNA U34 carboxymethyltransferase.